The sequence spans 418 residues: RapA guanosine triphosphatase-activating protein B (418 aa).

Residues 142–407 (LVKVCEPEFN…EKASALINVI (266 aa)) enclose the Rap-GAP domain. The tract at residues 304 to 339 (NRVVGEQPSPSLTTTTTTTTTTSPTINSNSPTPSNK) is disordered. Low complexity predominate over residues 311–338 (PSPSLTTTTTTTTTTSPTINSNSPTPSN).

In terms of biological role, mediates the deactivation of rap1 during multicellular development and is required for normal morphogenesis. Also required for the correct patterning of specific subtypes of prestalk cells. In Dictyostelium discoideum (Social amoeba), this protein is RapA guanosine triphosphatase-activating protein B (rapgapB).